We begin with the raw amino-acid sequence, 551 residues long: Fusion glycoprotein F0 (551 aa).

A signal peptide spans 1-23 (MHHLHPMIVCIFVMYTGIVGSDA). Over 24-492 (IAGDQLLNIG…TAKTLYSLSA (469 aa)) the chain is Extracellular. N-linked (GlcNAc...) asparagine; by host glycans are attached at residues Asn65, Asn69, Asn77, and Asn90. 5 cysteine pairs are disulfide-bonded: Cys68–Cys189, Cys328–Cys337, Cys352–Cys360, Cys384–Cys389, and Cys391–Cys414. The tract at residues 107-131 (FAGVVVGLAALGVATAAQITAAVAI) is fusion peptide. A coiled-coil region spans residues 132–160 (VKANANAAAINNLASSIQSTNKAVSDVID). Residues Asn431 and Asn461 are each glycosylated (N-linked (GlcNAc...) asparagine; by host). Positions 456 to 481 (QINSINKSLKSAEDWIADSNFFANQA) form a coiled coil. Residues 493 to 513 (IALILSVITLVVVGLLIAYII) traverse the membrane as a helical segment. Residues 514–551 (KLVSQIHQFRSLAATTMFHRENPAFFSKNNHGNIYGIS) are Cytoplasmic-facing.

This sequence belongs to the paramyxoviruses fusion glycoprotein family. As to quaternary structure, homotrimer of disulfide-linked F1-F2. In terms of processing, the inactive precursor F0 is glycosylated and proteolytically cleaved into F1 and F2 to be functionally active. The cleavage is mediated by cellular proteases during the transport and maturation of the polypeptide.

It localises to the virion membrane. It is found in the host cell membrane. Class I viral fusion protein. Under the current model, the protein has at least 3 conformational states: pre-fusion native state, pre-hairpin intermediate state, and post-fusion hairpin state. During viral and plasma cell membrane fusion, the heptad repeat (HR) regions assume a trimer-of-hairpins structure, positioning the fusion peptide in close proximity to the C-terminal region of the ectodomain. The formation of this structure appears to drive apposition and subsequent fusion of viral and plasma cell membranes. Directs fusion of viral and cellular membranes leading to delivery of the nucleocapsid into the cytoplasm. This fusion is pH independent and occurs directly at the outer cell membrane. The trimer of F1-F2 (F protein) probably interacts with HN at the virion surface. Upon HN binding to its cellular receptor, the hydrophobic fusion peptide is unmasked and interacts with the cellular membrane, inducing the fusion between cell and virion membranes. Later in infection, F proteins expressed at the plasma membrane of infected cells could mediate fusion with adjacent cells to form syncytia, a cytopathic effect that could lead to tissue necrosis. This Homo sapiens (Human) protein is Fusion glycoprotein F0 (F).